We begin with the raw amino-acid sequence, 358 residues long: Trace amine-associated receptor 7a (358 aa).

The Extracellular segment spans residues 1–47; it reads MDKLVDHFLSDQSRTMNEDLFSATSTELCYENLNRSCVRSPYSPGPR. Asparagine 34 carries an N-linked (GlcNAc...) asparagine glycan. Intrachain disulfides connect cysteine 37–cysteine 201 and cysteine 120–cysteine 205. The chain crosses the membrane as a helical span at residues 48 to 68; it reads LILYAVFGFGAALAVCGNLLV. The Cytoplasmic portion of the chain corresponds to 69-83; it reads MTSILHFRQLHSPAN. The helical transmembrane segment at 84–104 threads the bilayer; sequence FLVASLACADFLVGLTVMPFS. At 105–121 the chain is on the extracellular side; that stretch reads TVRSVEGCWYFGESYCK. A helical transmembrane segment spans residues 122-143; the sequence is FHSCFEGSFCYSSIFHLCFISV. Over 144–166 the chain is Cytoplasmic; that stretch reads DRYIAVSDPLTYPTRFTASVSGK. The chain crosses the membrane as a helical span at residues 167-187; it reads CITFSWLLSIIYSFSLLYTGA. Topologically, residues 188 to 212 are extracellular; sequence NEAGLEDLVSVLTCVGGCQIAVNQS. N-linked (GlcNAc...) asparagine glycosylation occurs at asparagine 210. A helical membrane pass occupies residues 213 to 233; sequence WVFINFLLFLIPTLVMMTVYS. At 234–274 the chain is on the cytoplasmic side; the sequence is KIFLIAKQQAQNIEKMSKQTARASESYKDRVAKRERKAAKT. A helical membrane pass occupies residues 275-295; the sequence is LGIAVAAFLLSWLPYFIDSII. Residues 296-309 lie on the Extracellular side of the membrane; that stretch reads DAFLGFITPTYVYE. The chain crosses the membrane as a helical span at residues 310 to 333; sequence ILVWIAYYNSAMNPLIYAFFYPWF. Over 334-358 the chain is Cytoplasmic; it reads RKAIKLIVTGKILRENSSTTNLFPE.

Belongs to the G-protein coupled receptor 1 family. Specifically expressed in neurons of the olfactory epithelium.

The protein localises to the cell membrane. Its function is as follows. Olfactory receptor specific for N,N-dimethylalkylamines trace amines. Trace amine compounds are enriched in animal body fluids and act on trace amine-associated receptors (TAARs) to elicit both intraspecific and interspecific innate behaviors. Ligand-binding causes a conformation change that triggers signaling via G(s)-class of G alpha proteins (GNAL or GNAS). This chain is Trace amine-associated receptor 7a, found in Mus musculus (Mouse).